A 110-amino-acid chain; its full sequence is Cytochrome c (110 aa).

Residues cysteine 21, cysteine 24, histidine 25, and methionine 87 each contribute to the heme c site.

This sequence belongs to the cytochrome c family. In terms of processing, binds 1 heme c group covalently per subunit.

It is found in the mitochondrion intermembrane space. In terms of biological role, electron carrier protein. The oxidized form of the cytochrome c heme group can accept an electron from the heme group of the cytochrome c1 subunit of cytochrome reductase. Cytochrome c then transfers this electron to the cytochrome oxidase complex, the final protein carrier in the mitochondrial electron-transport chain. This chain is Cytochrome c (CYCK), found in Kluyveromyces lactis (strain ATCC 8585 / CBS 2359 / DSM 70799 / NBRC 1267 / NRRL Y-1140 / WM37) (Yeast).